The sequence spans 610 residues: Diol dehydratase-reactivating factor large subunit (610 aa).

Residue 11–13 participates in ATP binding; that stretch reads NSS. Mg(2+) contacts are provided by threonine 105, aspartate 166, and aspartate 183. ATP contacts are provided by residues 459-462, 557-558, and arginine 591; these read EEIK and GS.

The protein belongs to the DdrA/PduG family. In terms of assembly, component of the DDR complex, a heterotetramer of DdrA(2)/DdrB(2). The DDR complex interacts with the diol dehydratase complex in the presence of ADP but not ATP. The cofactor is Mg(2+).

The enzyme catalyses ATP + H2O = ADP + phosphate + H(+). Functionally, large subunit of the diol dehydratase-reactivating factor (DDR), which reactivates suicidally inhibited adenosylcobalamin-dependent diol dehydratase (DD, pddA, pddB, pddC). DDR acts as a chaperone, reactivating inactivated DD holoenzyme in the presence of ATP, Mg(2+) and free adenosylcobalamin (AdoCbl), by mediating the exchange of the tightly bound damaged cofactor AdoCbl for a free intact one. Reactivation takes place in two steps: ADP-dependent cobalamin release, then ATP-dependent dissociation of the DD apoenzyme-DDR complex. DDR has weak ATPase activity which is required for DD reactivation. This subunit contains the adenosine nucleotide binding site. Activates glycerol-inactivated, O2-inactivated holoenzyme and inactivated enzyme-cyanocobalamin complex. Also reactivates glycerol-inactivated hologlycerol dehydratase, a DD isozyme. This chain is Diol dehydratase-reactivating factor large subunit, found in Klebsiella michiganensis (strain ATCC 8724 / DSM 4798 / JCM 20051 / NBRC 3318 / NRRL B-199 / KCTC 1686 / BUCSAV 143 / CCM 1901).